The following is a 208-amino-acid chain: Calcyphosin-like protein (208 aa).

EF-hand domains follow at residues 39–74, 75–110, 111–146, and 154–191; these read AGIK…YAVV, MEKE…PMSR, ARKE…KHHP, and SEEQ…VSAS. 10 residues coordinate Ca(2+): Asp-52, Asp-54, Asn-56, Thr-58, Glu-63, Asp-88, Asp-90, Asn-92, Thr-94, and Glu-99.

It is found in the cytoplasm. This Homo sapiens (Human) protein is Calcyphosin-like protein (CAPSL).